The chain runs to 96 residues: Putative septation protein SpoVG (96 aa).

This sequence belongs to the SpoVG family.

Its function is as follows. Could be involved in septation. This is Putative septation protein SpoVG from Oceanobacillus iheyensis (strain DSM 14371 / CIP 107618 / JCM 11309 / KCTC 3954 / HTE831).